The sequence spans 329 residues: RING finger protein 225 (329 aa).

Positions 1–55 (MPCPRPFWLRHSRAPQGSGPSSPGSLSAPRSPSRGEDQEEEEEEEGDGSPGSGPI) are disordered. Residues 14–32 (APQGSGPSSPGSLSAPRSP) are compositionally biased toward low complexity. A compositionally biased stretch (acidic residues) spans 37–47 (DQEEEEEEEGD). The RING-type zinc-finger motif lies at 64–112 (CLICVSSFDGVFKLPKRLDCGHVFCLECLARLSLATAGGGNAVACPVCR). Residues 122–181 (GLPALPTQSGLLPRDARAPPSRQGSVRFDRRRGLLYLRPPPPPPGPRKARAPPPPPPLRL) are disordered. Over residues 159–179 (RPPPPPPGPRKARAPPPPPPL) the composition is skewed to pro residues. Residues 203–223 (ALAVLVAAGLVVSGVYIFFLI) traverse the membrane as a helical segment. The interval 248-329 (FPPRPPPGSP…RGARRLWGSQ (82 aa)) is disordered. Over residues 281–293 (DALEPEAGPEDPA) the composition is skewed to acidic residues. A compositionally biased stretch (basic and acidic residues) spans 294 to 304 (EAERTLDRRSD).

It is found in the membrane. This chain is RING finger protein 225, found in Homo sapiens (Human).